Reading from the N-terminus, the 496-residue chain is Glycerol kinase (496 aa).

Position 12 (Thr12) interacts with ADP. 3 residues coordinate ATP: Thr12, Thr13, and Ser14. Thr12 is a binding site for sn-glycerol 3-phosphate. Arg16 is an ADP binding site. Sn-glycerol 3-phosphate contacts are provided by Arg82, Glu83, and Tyr134. 3 residues coordinate glycerol: Arg82, Glu83, and Tyr134. His230 bears the Phosphohistidine; by HPr mark. Sn-glycerol 3-phosphate is bound at residue Asp244. Glycerol is bound by residues Asp244 and Gln245. Residues Thr266 and Gly309 each contribute to the ADP site. ATP contacts are provided by Thr266, Gly309, Gln313, and Gly410. ADP-binding residues include Gly410 and Asn414.

Belongs to the FGGY kinase family. As to quaternary structure, homotetramer and homodimer (in equilibrium). Post-translationally, the phosphoenolpyruvate-dependent sugar phosphotransferase system (PTS), including enzyme I, and histidine-containing protein (HPr) are required for the phosphorylation, which leads to the activation of the enzyme.

It catalyses the reaction glycerol + ATP = sn-glycerol 3-phosphate + ADP + H(+). It participates in polyol metabolism; glycerol degradation via glycerol kinase pathway; sn-glycerol 3-phosphate from glycerol: step 1/1. Activated by phosphorylation and inhibited by fructose 1,6-bisphosphate (FBP). Functionally, key enzyme in the regulation of glycerol uptake and metabolism. Catalyzes the phosphorylation of glycerol to yield sn-glycerol 3-phosphate. This Geobacillus sp. (strain WCH70) protein is Glycerol kinase.